Consider the following 450-residue polypeptide: TNF receptor-associated factor family protein DDB_G0273433/DDB_G0273509 (450 aa).

Residues 26 to 73 (CQICFNSVIDFKKETLSFDVLQCRNGHISCHECWNRQLSIKQECPSCK) form an RING-type; degenerate zinc finger. 2 consecutive TRAF-type zinc fingers follow at residues 129-185 (HHLK…KKLN) and 186-243 (KHIE…SQLS). Residues 257 to 297 (QNVMDLHKLQLDECNQDYRKLEKQNRDLEKRLFYLESTVNS) adopt a coiled-coil conformation. The region spanning 319 to 439 (VYKGKWVINN…NNSLTISISI (121 aa)) is the MATH domain.

Belongs to the TNF receptor-associated factor family. A subfamily.

It localises to the cytoplasm. In terms of biological role, probable adapter protein and signal transducer that links members of the tumor necrosis factor receptor family to different signaling pathways by association with the receptor cytoplasmic domain and kinases. The chain is TNF receptor-associated factor family protein DDB_G0273433/DDB_G0273509 from Dictyostelium discoideum (Social amoeba).